A 562-amino-acid chain; its full sequence is Phosphoenolpyruvate carboxykinase (ATP) (562 aa).

265–272 serves as a coordination point for ATP; sequence GLSGTGKT.

The protein belongs to the phosphoenolpyruvate carboxykinase (ATP) family.

It carries out the reaction oxaloacetate + ATP = phosphoenolpyruvate + ADP + CO2. It participates in carbohydrate biosynthesis; gluconeogenesis. In Dictyostelium discoideum (Social amoeba), this protein is Phosphoenolpyruvate carboxykinase (ATP) (pckA).